A 305-amino-acid chain; its full sequence is RxLR effector protein 17 (305 aa).

Positions 1-24 (MQSILWFALIASVVFLVLVDLASG) are cleaved as a signal peptide. A RxLR-dEER motif is present at residues 45–60 (RLLRAAHLDRKLSEER). Residues Asn207 and Asn227 are each glycosylated (N-linked (GlcNAc...) asparagine). The interval 247-269 (LHLKWAVEAKSPKDVVERILKDL) is w motif.

This sequence belongs to the RxLR effector family. Interacts with host A.thaliana At1G14340.

The protein localises to the secreted. It is found in the host cell membrane. Functionally, secreted effector that confers enhanced plant susceptibility during both compatible and incompatible interactions between the pathogen and its host. Promotes the sexual reproduction of the pathogen in the plant host. This is RxLR effector protein 17 from Hyaloperonospora arabidopsidis (strain Emoy2) (Downy mildew agent).